The sequence spans 207 residues: Large ribosomal subunit protein uL4 (207 aa).

The tract at residues 52–77 is disordered; the sequence is RGWADVSGGGRKPWRQKGTGRARAGS.

The protein belongs to the universal ribosomal protein uL4 family. In terms of assembly, part of the 50S ribosomal subunit.

In terms of biological role, one of the primary rRNA binding proteins, this protein initially binds near the 5'-end of the 23S rRNA. It is important during the early stages of 50S assembly. It makes multiple contacts with different domains of the 23S rRNA in the assembled 50S subunit and ribosome. Forms part of the polypeptide exit tunnel. This is Large ribosomal subunit protein uL4 from Moorella thermoacetica (strain ATCC 39073 / JCM 9320).